The sequence spans 690 residues: Glycine--tRNA ligase beta subunit (690 aa).

It belongs to the class-II aminoacyl-tRNA synthetase family. As to quaternary structure, tetramer of two alpha and two beta subunits.

The protein resides in the cytoplasm. It catalyses the reaction tRNA(Gly) + glycine + ATP = glycyl-tRNA(Gly) + AMP + diphosphate. This chain is Glycine--tRNA ligase beta subunit, found in Tolumonas auensis (strain DSM 9187 / NBRC 110442 / TA 4).